Consider the following 96-residue polypeptide: (4S)-4-hydroxy-5-phosphonooxypentane-2,3-dione isomerase (96 aa).

One can recognise an ABM domain in the interval 2 to 91; sequence HVTLVEINVH…MTGPRTKKVF (90 aa).

The protein belongs to the LsrG family. Homodimer.

It localises to the cytoplasm. The catalysed reaction is (2S)-2-hydroxy-3,4-dioxopentyl phosphate = 3-hydroxy-2,4-dioxopentyl phosphate. In terms of biological role, involved in the degradation of phospho-AI-2, thereby terminating induction of the lsr operon and closing the AI-2 signaling cycle. Catalyzes the conversion of (4S)-4-hydroxy-5-phosphonooxypentane-2,3-dione (P-DPD) to 3-hydroxy-5-phosphonooxypentane-2,4-dione (P-HPD). This chain is (4S)-4-hydroxy-5-phosphonooxypentane-2,3-dione isomerase, found in Salmonella choleraesuis (strain SC-B67).